The chain runs to 473 residues: Ribulose bisphosphate carboxylase large chain (473 aa).

Substrate-binding residues include Asn116 and Thr166. Lys168 acts as the Proton acceptor in catalysis. Lys170 serves as a coordination point for substrate. Mg(2+)-binding residues include Lys194, Asp196, and Glu197. Lys194 bears the N6-carboxylysine mark. His287 serves as the catalytic Proton acceptor. Residues Arg288, His320, and Ser372 each contribute to the substrate site.

The protein belongs to the RuBisCO large chain family. Type I subfamily. Heterohexadecamer of 8 large chains and 8 small chains. The cofactor is Mg(2+).

The enzyme catalyses 2 (2R)-3-phosphoglycerate + 2 H(+) = D-ribulose 1,5-bisphosphate + CO2 + H2O. The catalysed reaction is D-ribulose 1,5-bisphosphate + O2 = 2-phosphoglycolate + (2R)-3-phosphoglycerate + 2 H(+). In terms of biological role, ruBisCO catalyzes two reactions: the carboxylation of D-ribulose 1,5-bisphosphate, the primary event in carbon dioxide fixation, as well as the oxidative fragmentation of the pentose substrate. Both reactions occur simultaneously and in competition at the same active site. The chain is Ribulose bisphosphate carboxylase large chain from Cupriavidus metallidurans (strain ATCC 43123 / DSM 2839 / NBRC 102507 / CH34) (Ralstonia metallidurans).